The chain runs to 302 residues: Large ribosomal subunit protein bL28m (302 aa).

Belongs to the bacterial ribosomal protein bL28 family. In terms of assembly, component of the mitochondrial ribosome large subunit (39S) which comprises a 16S rRNA and about 50 distinct proteins.

The protein localises to the mitochondrion. The polypeptide is Large ribosomal subunit protein bL28m (mRpL28) (Drosophila melanogaster (Fruit fly)).